We begin with the raw amino-acid sequence, 209 residues long: Large ribosomal subunit protein uL3 (209 aa).

A disordered region spans residues 126–165; the sequence is HNFGGGSRTHGQSDRLRAPGSVGGSSDPSRTFRGTRMAGR.

It belongs to the universal ribosomal protein uL3 family. Part of the 50S ribosomal subunit. Forms a cluster with proteins L14 and L19.

Functionally, one of the primary rRNA binding proteins, it binds directly near the 3'-end of the 23S rRNA, where it nucleates assembly of the 50S subunit. The protein is Large ribosomal subunit protein uL3 of Chlorobium limicola (strain DSM 245 / NBRC 103803 / 6330).